We begin with the raw amino-acid sequence, 433 residues long: Zinc finger and SCAN domain-containing protein 4 (433 aa).

The region spanning 44-126 (RMVLNSFQDS…RFIEDLTDDS (83 aa)) is the SCAN box domain. Composition is skewed to polar residues over residues 165–185 (TTRE…SLET), 195–210 (GWNS…ENIT), and 277–299 (QPEQ…STCE). 2 disordered regions span residues 165-210 (TTRE…ENIT) and 275-301 (ISQP…CEVH). C2H2-type zinc fingers lie at residues 312–334 (YKCE…QRRH), 340–362 (FVCP…QIIH), 368–390 (FTCS…ERIH), and 396–418 (YTCP…MRTH).

The protein localises to the nucleus. It localises to the chromosome. The protein resides in the telomere. Embryonic stem (ES) cell-specific transcription factor required to regulate ES cell pluripotency. Binds telomeres and plays a key role in genomic stability in ES cells by regulating telomere elongation. Acts as an activator of spontaneous telomere sister chromatid exchange (T-SCE) and telomere elongation in undifferentiated ES cells. The polypeptide is Zinc finger and SCAN domain-containing protein 4 (ZSCAN4) (Homo sapiens (Human)).